The following is a 112-amino-acid chain: Putative pterin-4-alpha-carbinolamine dehydratase (112 aa).

The protein belongs to the pterin-4-alpha-carbinolamine dehydratase family.

It catalyses the reaction (4aS,6R)-4a-hydroxy-L-erythro-5,6,7,8-tetrahydrobiopterin = (6R)-L-erythro-6,7-dihydrobiopterin + H2O. In Shewanella denitrificans (strain OS217 / ATCC BAA-1090 / DSM 15013), this protein is Putative pterin-4-alpha-carbinolamine dehydratase.